The chain runs to 216 residues: Protein YabP (216 aa).

The polypeptide is Protein YabP (yabP) (Escherichia coli (strain K12)).